The following is a 736-amino-acid chain: Zinc finger CCCH domain-containing protein 14 (736 aa).

The residue at position 1 (Met-1) is an N-acetylmethionine. Composition is skewed to polar residues over residues 78-103 and 131-145; these read TEPS…SNFS and VSTS…NVRQ. The tract at residues 78 to 146 is disordered; the sequence is TEPSSLKSSD…ESKTTNVRQT (69 aa). Phosphoserine is present on Ser-85. Glycyl lysine isopeptide (Lys-Gly) (interchain with G-Cter in SUMO2) cross-links involve residues Lys-99, Lys-139, Lys-175, and Lys-198. Residue Ser-240 is modified to Phosphoserine. Lys-245 is covalently cross-linked (Glycyl lysine isopeptide (Lys-Gly) (interchain with G-Cter in SUMO2)). Residue Ser-281 is modified to Phosphoserine. Glycyl lysine isopeptide (Lys-Gly) (interchain with G-Cter in SUMO2) cross-links involve residues Lys-283 and Lys-295. Residues 310–350 form a disordered region; sequence HDGEEEEEDDDYGSRTGSISSSVSVPAKPERRPSLPPSKQA. Phosphoserine is present on residues Ser-327 and Ser-343. At Lys-357 the chain carries N6-acetyllysine; alternate. Lys-357 participates in a covalent cross-link: Glycyl lysine isopeptide (Lys-Gly) (interchain with G-Cter in SUMO2); alternate. Lys-378 is covalently cross-linked (Glycyl lysine isopeptide (Lys-Gly) (interchain with G-Cter in SUMO2)). 2 positions are modified to phosphoserine: Ser-390 and Ser-409. The disordered stretch occupies residues 398-430; that stretch reads VVQGQSRTPRISPPIKEEETKGDSVEKNQGTQQ. Positions 412 to 423 are enriched in basic and acidic residues; the sequence is IKEEETKGDSVE. Lys-413 is covalently cross-linked (Glycyl lysine isopeptide (Lys-Gly) (interchain with G-Cter in SUMO2)). A Phosphoserine modification is found at Ser-421. Residue Lys-489 forms a Glycyl lysine isopeptide (Lys-Gly) (interchain with G-Cter in SUMO2) linkage. A phosphoserine mark is found at Ser-498, Ser-515, Ser-527, and Ser-620. C3H1-type zinc fingers lie at residues 595–620, 621–640, 641–656, 682–699, and 701–719; these read EKLL…HPIS, PCKA…VHPN, CKYD…PFTH, CRYF…YHPK, and CRFN…HPTI.

It belongs to the ZC3H14 family. As to quaternary structure, homodimer; facilitating circular RNAs (circRNAs) formation. Associates with the spliceosome. Interacts with HOOK2. Interacts with ZFC3H1 in a RNase-sensitive manner.

It is found in the nucleus speckle. In terms of biological role, RNA-binding protein involved in the biogenesis of circular RNAs (circRNAs), which are produced by back-splicing circularization of pre-mRNAs. Acts by binding to both exon-intron boundary and 3'-UTR of pre-mRNAs to promote circRNA biogenesis through dimerization and the association with the spliceosome. Required for spermatogenesis via involvement in circRNA biogenesis. Regulates the pre-mRNA processing of ATP5MC1; preventing its degradation. Also binds the poly(A) tail of mRNAs; controlling poly(A) length in neuronal cells. This chain is Zinc finger CCCH domain-containing protein 14 (ZC3H14), found in Macaca fascicularis (Crab-eating macaque).